We begin with the raw amino-acid sequence, 278 residues long: Large ribosomal subunit protein uL2 (278 aa).

2 disordered regions span residues 1 to 58 (MGIR…GGGH) and 210 to 278 (GRMR…GKKR). Positions 23-33 (EVTRSEPEKSL) are enriched in basic and acidic residues. Positions 40–49 (SGGRNSTGRI) are enriched in low complexity. Basic residues-rich tracts occupy residues 210–220 (GRMRWKGKRPS) and 269–278 (VRRRRTGKKR).

This sequence belongs to the universal ribosomal protein uL2 family. In terms of assembly, part of the 50S ribosomal subunit. Forms a bridge to the 30S subunit in the 70S ribosome.

In terms of biological role, one of the primary rRNA binding proteins. Required for association of the 30S and 50S subunits to form the 70S ribosome, for tRNA binding and peptide bond formation. It has been suggested to have peptidyltransferase activity; this is somewhat controversial. Makes several contacts with the 16S rRNA in the 70S ribosome. In Beutenbergia cavernae (strain ATCC BAA-8 / DSM 12333 / CCUG 43141 / JCM 11478 / NBRC 16432 / NCIMB 13614 / HKI 0122), this protein is Large ribosomal subunit protein uL2.